The chain runs to 405 residues: 8-amino-7-oxononanoate synthase (405 aa).

Substrate is bound at residue Arg-23. Position 114 to 115 (Gly-114 to Tyr-115) interacts with pyridoxal 5'-phosphate. Residue His-139 participates in substrate binding. Residues Ser-185, His-213, and Thr-245 each contribute to the pyridoxal 5'-phosphate site. Lys-248 bears the N6-(pyridoxal phosphate)lysine mark. Position 366 (Thr-366) interacts with substrate.

Belongs to the class-II pyridoxal-phosphate-dependent aminotransferase family. BioF subfamily. Homodimer. Pyridoxal 5'-phosphate serves as cofactor.

It catalyses the reaction 6-carboxyhexanoyl-[ACP] + L-alanine + H(+) = (8S)-8-amino-7-oxononanoate + holo-[ACP] + CO2. The protein operates within cofactor biosynthesis; biotin biosynthesis. In terms of biological role, catalyzes the decarboxylative condensation of pimeloyl-[acyl-carrier protein] and L-alanine to produce 8-amino-7-oxononanoate (AON), [acyl-carrier protein], and carbon dioxide. The protein is 8-amino-7-oxononanoate synthase of Delftia acidovorans (strain DSM 14801 / SPH-1).